We begin with the raw amino-acid sequence, 205 residues long: High frequency lysogenization protein HflD homolog (205 aa).

It belongs to the HflD family.

The protein localises to the cytoplasm. Its subcellular location is the cell inner membrane. The polypeptide is High frequency lysogenization protein HflD homolog (Shewanella pealeana (strain ATCC 700345 / ANG-SQ1)).